A 397-amino-acid chain; its full sequence is Na(+)/H(+) antiporter NhaA 2 (397 aa).

Helical transmembrane passes span 9–29 (LHNP…AMAV), 59–79 (LLLW…GLEL), 95–115 (ILPV…YTLI), 125–145 (GWAI…ALLG), 154–174 (LFLL…IAFF), 177–197 (SELS…LILM), 222–242 (SGVH…LKGE), 260–280 (VVGL…SLQG), 292–312 (LGIA…FVWL), 332–352 (GVAL…SLAF), and 371–391 (LGIL…LRFS).

This sequence belongs to the NhaA Na(+)/H(+) (TC 2.A.33) antiporter family.

It is found in the cell inner membrane. The catalysed reaction is Na(+)(in) + 2 H(+)(out) = Na(+)(out) + 2 H(+)(in). Na(+)/H(+) antiporter that extrudes sodium in exchange for external protons. This Magnetococcus marinus (strain ATCC BAA-1437 / JCM 17883 / MC-1) protein is Na(+)/H(+) antiporter NhaA 2.